The sequence spans 317 residues: MLRNGSIVTEFILVGFQQSSTSTRALLFALFLALYSLTMAMNGLIIFITSWTDPKLNSPMYFFLGHLSLLDVCFITTTIPQMLIHLVVRDHIVSFVCCMTQMYFVFCVGVAECILLAFMAYDRYVAICYPLNYVPIISQKVCVRLVGTAWFFGLINGIFLEYISFREPFRRDNHIESFFCEAPIVIGLSCGDPQFSLWAIFADAIVVILSPMVLTVTSYVHILATILSKASSSGRGKTFSTCASHLTVVIFLYTSAMFSYMNPHSTHGPDKDKPFSLLYTIITPMCNPIIYSFRNKEIKEAMVRALGRTRLAQPQSV.

At 1–25 (MLRNGSIVTEFILVGFQQSSTSTRA) the chain is on the extracellular side. N-linked (GlcNAc...) asparagine glycosylation is present at asparagine 4. The helical transmembrane segment at 26-46 (LLFALFLALYSLTMAMNGLII) threads the bilayer. Residues 47–55 (FITSWTDPK) are Cytoplasmic-facing. Residues 56–76 (LNSPMYFFLGHLSLLDVCFIT) form a helical membrane-spanning segment. Topologically, residues 77 to 100 (TTIPQMLIHLVVRDHIVSFVCCMT) are extracellular. An intrachain disulfide couples cysteine 98 to cysteine 190. A helical membrane pass occupies residues 101–121 (QMYFVFCVGVAECILLAFMAY). Residues 122-140 (DRYVAICYPLNYVPIISQK) lie on the Cytoplasmic side of the membrane. A helical transmembrane segment spans residues 141 to 161 (VCVRLVGTAWFFGLINGIFLE). Topologically, residues 162–198 (YISFREPFRRDNHIESFFCEAPIVIGLSCGDPQFSLW) are extracellular. Residues 199-218 (AIFADAIVVILSPMVLTVTS) traverse the membrane as a helical segment. Residues 219-238 (YVHILATILSKASSSGRGKT) are Cytoplasmic-facing. A helical transmembrane segment spans residues 239–259 (FSTCASHLTVVIFLYTSAMFS). The Extracellular portion of the chain corresponds to 260-272 (YMNPHSTHGPDKD). Residues 273 to 293 (KPFSLLYTIITPMCNPIIYSF) form a helical membrane-spanning segment. The Cytoplasmic segment spans residues 294 to 317 (RNKEIKEAMVRALGRTRLAQPQSV).

This sequence belongs to the G-protein coupled receptor 1 family.

It is found in the cell membrane. Its function is as follows. Odorant receptor. This Homo sapiens (Human) protein is Olfactory receptor 10AD1 (OR10AD1).